Reading from the N-terminus, the 1158-residue chain is Type IV pilus biogenesis factor PilY1 (1158 aa).

The N-terminal stretch at 1–29 (MIHQITRAGKSLLAAGCTLSILFASDSYA) is a signal peptide. Ca(2+) contacts are provided by D841, N843, D845, I847, and D849.

It belongs to the PilY1 family.

The protein localises to the fimbrium. Its subcellular location is the membrane. It is found in the cytoplasm. The protein resides in the cytosol. Involved in pilus assembly, twitching motility and adhesion to host cells. Primes type IV pili (T4P) assembly and is required for inclusion of minor pilins PilV, PilW and PilX to the surface pili. Stabilizes assembled pilus fibers likely by antagonizing retraction mediated by PilT. Calcium-binding and calcium release by PilY1 seem to be essential for twitching motility and for regulation of pilus retraction dynamics of PilT. Regulates surface-activated virulence possibly by acting as a surface-attachment mechanosensor. The chain is Type IV pilus biogenesis factor PilY1 from Pseudomonas aeruginosa (strain UCBPP-PA14).